The sequence spans 1100 residues: DNA-directed RNA polymerase subunit beta (1100 aa).

The disordered stretch occupies residues 1064–1100; sequence YEEDKEVDLMADVNQRRTPSRPTYESMSVGDIDDDDD. The span at 1079 to 1089 shows a compositional bias: polar residues; that stretch reads RRTPSRPTYES.

Belongs to the RNA polymerase beta chain family. In cyanobacteria the RNAP catalytic core is composed of 2 alpha, 1 beta, 1 beta', 1 gamma and 1 omega subunit. When a sigma factor is associated with the core the holoenzyme is formed, which can initiate transcription.

The catalysed reaction is RNA(n) + a ribonucleoside 5'-triphosphate = RNA(n+1) + diphosphate. Its function is as follows. DNA-dependent RNA polymerase catalyzes the transcription of DNA into RNA using the four ribonucleoside triphosphates as substrates. The polypeptide is DNA-directed RNA polymerase subunit beta (Synechococcus elongatus (strain ATCC 33912 / PCC 7942 / FACHB-805) (Anacystis nidulans R2)).